The following is an 88-amino-acid chain: EMBRYO SURROUNDING FACTOR 1-like protein 11 (88 aa).

Residues 1–23 (MISSSHFAIFCIILVSLFALQQY) form the signal peptide. Cystine bridges form between Cys44/Cys59, Cys49/Cys78, Cys57/Cys74, and Cys60/Cys67.

It belongs to the MEG family. In terms of tissue distribution, expressed in stems.

This Arabidopsis thaliana (Mouse-ear cress) protein is EMBRYO SURROUNDING FACTOR 1-like protein 11 (ESFL11).